We begin with the raw amino-acid sequence, 208 residues long: Putative thymidylate kinase (208 aa).

The segment at 12-19 (GIDGTGTS) is defective ATP-binding.

It belongs to the thymidylate kinase family.

The catalysed reaction is dTMP + ATP = dTDP + ADP. The polypeptide is Putative thymidylate kinase (tmk) (Treponema pallidum (strain Nichols)).